Consider the following 278-residue polypeptide: MADS-box transcription factor PHERES 2 (278 aa).

Residues 1-60 (MKRKMKLSLIENSVSRKTTFTKRKKGMTKKLTELVTLCGVEACAVVYSPFNSIPEAWPSR) form the MADS-box domain.

As to quaternary structure, interacts with AGL61/DIANA and AGL62. Male gametophyte, embryo and endosperm.

The protein resides in the nucleus. Functionally, probable transcription factor involved in the development of gametophytes and seeds. In Arabidopsis thaliana (Mouse-ear cress), this protein is MADS-box transcription factor PHERES 2 (PHE2).